The primary structure comprises 287 residues: Universal stress protein Slr1230 (287 aa).

This sequence belongs to the universal stress protein A family.

The protein is Universal stress protein Slr1230 of Synechocystis sp. (strain ATCC 27184 / PCC 6803 / Kazusa).